Here is a 668-residue protein sequence, read N- to C-terminus: RNA-binding protein PIN4 (668 aa).

A disordered region spans residues 1–77; sequence METSSFENAP…NLNNAPTNGA (77 aa). A compositionally biased stretch (low complexity) spans 8–23; sequence NAPPAAINDAQDNNIN. The span at 24–36 shows a compositional bias: polar residues; it reads TETNDQETNQQSI. A compositionally biased stretch (basic and acidic residues) spans 37 to 46; sequence ETRDAIDKEN. Residues 47–74 show a composition bias toward polar residues; the sequence is GVQTETGENSAKNAEQNVSSTNLNNAPT. The residue at position 56 (S56) is a Phosphoserine. Residues 85–163 form the RRM domain; it reads NAIVIKNIPF…RKLKVEYKKM (79 aa). The span at 168 to 188 shows a compositional bias: basic and acidic residues; it reads ERERIEREKREKRGQLEEQHR. The segment at 168–214 is disordered; sequence ERERIEREKREKRGQLEEQHRSSSNLSLDSLSKMSGSGNNNTSNNQL. Phosphoserine is present on residues S189, S191, S194, and S197. The span at 189-212 shows a compositional bias: low complexity; that stretch reads SSSNLSLDSLSKMSGSGNNNTSNN. Position 305 is a phosphothreonine (T305). Disordered regions lie at residues 374-398 and 420-570; these read QQQG…NRSQ and VNNS…QRVP. S393 carries the phosphoserine modification. The segment covering 420 to 449 has biased composition (low complexity); it reads VNNSSNSNTINSNNGNGNNVIINNNSASST. Residues 450-478 show a composition bias toward polar residues; it reads PKISSQGQFSMQPTLTSPKMNIHHSSQYN. Residue S466 is modified to Phosphoserine. The segment covering 479–508 has biased composition (low complexity); the sequence is SADQPQQPQPQTQQNVQSAAQQQQSFLRQQ. A compositionally biased stretch (polar residues) spans 509-551; that stretch reads ATLTPSSRIPSGYSANHYQINSVNPLLRNSQISPPNSQIPINS. At S541 the chain carries Phosphoserine. The span at 552–567 shows a compositional bias: low complexity; that stretch reads QTLSQAQPPAQSQTQQ. S636, S638, S640, S653, and S655 each carry phosphoserine.

Interacts with RAD53. In terms of processing, hyperphosphorylated in response to DNA damage by MEC1.

The protein resides in the cytoplasm. Involved in normal G2/M phase transition of the mitotic cell cycle. In association with RAD53, also involved in checkpoint control in response to DNA damage. The sequence is that of RNA-binding protein PIN4 (PIN4) from Saccharomyces cerevisiae (strain ATCC 204508 / S288c) (Baker's yeast).